The sequence spans 142 residues: Ribosome-binding factor A (142 aa).

Positions aspartate 118 to aspartate 130 are enriched in basic and acidic residues. The tract at residues aspartate 118–aspartate 142 is disordered. A compositionally biased stretch (acidic residues) spans threonine 131 to aspartate 142.

This sequence belongs to the RbfA family. In terms of assembly, monomer. Binds 30S ribosomal subunits, but not 50S ribosomal subunits or 70S ribosomes.

It is found in the cytoplasm. Its function is as follows. One of several proteins that assist in the late maturation steps of the functional core of the 30S ribosomal subunit. Associates with free 30S ribosomal subunits (but not with 30S subunits that are part of 70S ribosomes or polysomes). Required for efficient processing of 16S rRNA. May interact with the 5'-terminal helix region of 16S rRNA. The protein is Ribosome-binding factor A of Shewanella denitrificans (strain OS217 / ATCC BAA-1090 / DSM 15013).